A 98-amino-acid chain; its full sequence is Citrate lyase acyl carrier protein (98 aa).

The residue at position 14 (Ser-14) is an O-(phosphoribosyl dephospho-coenzyme A)serine.

The protein belongs to the CitD family. In terms of assembly, oligomer with a subunit composition of (alpha,beta,gamma)6.

The protein localises to the cytoplasm. Covalent carrier of the coenzyme of citrate lyase. The polypeptide is Citrate lyase acyl carrier protein (Escherichia coli O127:H6 (strain E2348/69 / EPEC)).